A 328-amino-acid polypeptide reads, in one-letter code: MAIQTLDYRDFQYGGQEQHRTFCHNLCETLSTWGFIKIQNTSIPDAVIDELFSYNKKFFALPEHIKQKARHPAAPNPHRGWSAVGQEQLSRIAGFEKDEETDGFVPEYRESFDQGAADDELFPNRWIDEDDLPGFRKFMENYYEMCYNFHTQLLRAISTGLSLPEDLLLSRHQTDTSELRMNHYPAIACENLKFGMRIGEHSDFGTLTLLLQDSTGGLQVEDQKKLGTFIPVESDSRYEVIVNVGDCLQRWTNRRLRSANHRVHLPEGKNFKSDEVLADRYSVAYFGKPDRNVLVDSFPEFCRGGESKYNDHMNALEYNQTKLLRTYA.

In terms of domain architecture, Fe2OG dioxygenase spans 175-289; sequence DTSELRMNHY…RYSVAYFGKP (115 aa). Residues histidine 201, aspartate 203, and histidine 261 each coordinate Fe cation. Arginine 280 is a 2-oxoglutarate binding site.

The protein belongs to the iron/ascorbate-dependent oxidoreductase family. Fe(2+) is required as a cofactor.

It participates in mycotoxin biosynthesis. Functionally, 2-oxoglutarate-dependent dioxygenase; part of the gene cluster that mediates the biosynthesis of pneumocandins, lipohexapeptides of the echinocandin family that prevent fungal cell wall formation by non-competitive inhibition of beta-1,3-glucan synthase. The 10,12-dimethylmyristoyl side chain is synthesized by the reducing polyketide synthase gloL/GLPKS4. The thioesterase gloN/GLHYD exclusively interacts with gloL/GLPKS4 to maintain turnover of the polyketide side chain. The 10R,12S-dimethylmyristic acid is then transferred to the first thiolation domain of the nonribosomal peptide synthetase gloA/GLNRPS4 by the acyl-AMP ligase gloD/GLligase, followed by its acylation to L-ornithine to trigger elongation of the cyclic hexapeptide. L-ornithine, 4R-hydroxyl-L-proline (generated from L-proline by the dioxygenase gloF/GLOXY2), 3S-hydroxyl-L-homotyrosine (generated by gloG/GLHtyB, gloH/GLHtyA, gloI/GLHtyC, gloJ/GLHtyD and hydroxylated at C-3 by the dioxygenase gloM/GLOXY1), 3R-hydroxyl-L-glutamine (generated from L-glutamine probably by the dioxygenase gloE/GLOXY3) and 3S-hydroxyl-L-proline (generated from L-proline by the dioxygenase gloF/GLOXY2 to yield pneumocandin B0), or 3S-hydroxyl-4S-methyl-L-proline (generated from L-leucine by the dioxygenase gloC/GLOXY4 to yield pneumocandin A0) are sequentially added to the growing chain. The last C domain of gloA/GLNRPS4 is proposed to be responsible for cyclization by condensation to form the peptide bond between L-ornithine and 3S-hydroxyl-4S-methyl-L-proline (for pneumocandin A0) or 3S-hydroxyl-L-proline (for pneumocandin B0). Finally, the subsequent C-4 hydroxylation of 3S-hydroxyl-L-homotyrosine and L-ornithine dihydroxylation at C-4 and C-5 are performed by the cytochrome P450 monooxygenases gloP/GLP450-1 and gloO/GLP450-2, respectively. The polypeptide is 2-oxoglutarate-dependent dioxygenase gloF (Glarea lozoyensis (strain ATCC 20868 / MF5171)).